We begin with the raw amino-acid sequence, 76 residues long: Proteolipid protein 2 (76 aa).

Residues 1 to 60 (ISGPWSDFFRALGAVILYLMTSIVVLVERGNNSKGAAGVLGLCAAGLFGYDAYITFPSGT) form the MARVEL domain. A helical membrane pass occupies residues 8 to 28 (FFRALGAVILYLMTSIVVLVE). Asn-31 is a glycosylation site (N-linked (GlcNAc...) asparagine). A helical membrane pass occupies residues 36-56 (AAGVLGLCAAGLFGYDAYITF).

The protein localises to the membrane. May play a role in cell differentiation in the intestinal epithelium. This Ovis aries (Sheep) protein is Proteolipid protein 2 (PLP2).